A 130-amino-acid polypeptide reads, in one-letter code: Small ribosomal subunit protein uS8 (130 aa).

This sequence belongs to the universal ribosomal protein uS8 family. Part of the 30S ribosomal subunit. Contacts proteins S5 and S12.

One of the primary rRNA binding proteins, it binds directly to 16S rRNA central domain where it helps coordinate assembly of the platform of the 30S subunit. This chain is Small ribosomal subunit protein uS8, found in Alcanivorax borkumensis (strain ATCC 700651 / DSM 11573 / NCIMB 13689 / SK2).